Here is a 303-residue protein sequence, read N- to C-terminus: Beta-lactamase L2 (303 aa).

The tat-type signal signal peptide spans 1–35; the sequence is MLARRRFLQFSGAAVASSLALPLLARAAGKTAASA. S83 functions as the Acyl-ester intermediate in the catalytic mechanism. 247–249 contacts substrate; it reads KTG.

This sequence belongs to the class-A beta-lactamase family. In terms of processing, predicted to be exported by the Tat system. The position of the signal peptide cleavage has not been experimentally proven.

It carries out the reaction a beta-lactam + H2O = a substituted beta-amino acid. This chain is Beta-lactamase L2, found in Stenotrophomonas maltophilia (Pseudomonas maltophilia).